Here is a 468-residue protein sequence, read N- to C-terminus: Abscisic acid 8'-hydroxylase 4 (468 aa).

Residues 4 to 24 traverse the membrane as a helical segment; it reads IWFLVVPILILCLLLVRVIVS. Cysteine 415 is a heme binding site.

The protein belongs to the cytochrome P450 family. Heme is required as a cofactor. As to expression, mainly expressed in flowers. Lower expression in siliques, rosette leaves, roots and stems. Not expressed in dry seeds. Expressed in silique envelopes, but not in embryo or endosperm during the seed development.

The protein localises to the membrane. The catalysed reaction is 2-cis-(+)-abscisate + reduced [NADPH--hemoprotein reductase] + O2 = (+)-8'-hydroxyabscisate + oxidized [NADPH--hemoprotein reductase] + H2O + H(+). Its pathway is plant hormone degradation; abscisic acid degradation. Functionally, involved in the oxidative degradation of abscisic acid, but not in the isomerization of the produced 8'-hydroxyabscisic acid (8'-OH-ABA) to (-)-phaseic acid (PA). The protein is Abscisic acid 8'-hydroxylase 4 (CYP707A4) of Arabidopsis thaliana (Mouse-ear cress).